The following is a 341-amino-acid chain: HTH-type transcriptional repressor PurR (341 aa).

The region spanning 2–56 (ATIKDVAKRAGVSTTTVSHVINKTRFVADETREAVWVAIKELHYSPSAVARSLKV) is the HTH lacI-type domain. A DNA-binding region (H-T-H motif) is located at residues 4–23 (IKDVAKRAGVSTTTVSHVIN). Residues 48–56 (SAVARSLKV) mediate DNA binding. Residues Tyr73, Arg190, Thr192, Phe221, and Asp275 each contribute to the hypoxanthine site.

Homodimer.

The protein operates within purine metabolism; purine nucleotide biosynthesis [regulation]. Is the main repressor of the genes involved in the de novo synthesis of purine nucleotides, regulating purB, purC, purEK, purF, purHD, purL, purMN and guaBA expression. PurR is allosterically activated to bind its cognate DNA by binding the purine corepressors, hypoxanthine or guanine, thereby effecting transcription repression. This Erwinia tasmaniensis (strain DSM 17950 / CFBP 7177 / CIP 109463 / NCPPB 4357 / Et1/99) protein is HTH-type transcriptional repressor PurR.